The primary structure comprises 347 residues: Heat-inducible transcription repressor HrcA (347 aa).

This sequence belongs to the HrcA family.

Its function is as follows. Negative regulator of class I heat shock genes (grpE-dnaK-dnaJ and groELS operons). Prevents heat-shock induction of these operons. The sequence is that of Heat-inducible transcription repressor HrcA from Sphingopyxis alaskensis (strain DSM 13593 / LMG 18877 / RB2256) (Sphingomonas alaskensis).